Here is a 1194-residue protein sequence, read N- to C-terminus: Protein argonaute 3 (1194 aa).

Residues 1–98 (MDRGGYRGGR…GRGGGGDRGR (98 aa)) are compositionally biased toward basic and acidic residues. Disordered regions lie at residues 1-277 (MDRG…VSQS) and 299-341 (TVLP…DKGG). The span at 142-158 (PPSSSQAQVSQGVAPGD) shows a compositional bias: low complexity. Basic and acidic residues predominate over residues 167 to 180 (VGRDGVGDVGRDGV). Residues 181 to 214 (GDVGQGGVGDVGQVGVGDVGQGGVGDVGQGGVGD) show a composition bias toward gly residues. A compositionally biased stretch (basic and acidic residues) spans 215 to 228 (VGRDGVGDVGRDGV). A compositionally biased stretch (gly residues) spans 229–238 (GDVGRGGVGD). Low complexity-rich tracts occupy residues 256 to 277 (QLQQ…VSQS) and 299 to 316 (TVLP…HTAS). The segment covering 317 to 326 (GSQVMTPKPS) has biased composition (polar residues). Residues 327-341 (SSDKKEPVKRPDKGG) are compositionally biased toward basic and acidic residues. The PAZ domain occupies 540–656 (SVIEYLKLYF…VPMEFCNLVE (117 aa)). One can recognise a Piwi domain in the interval 841 to 1145 (LVLCAMTGKH…AASRGRVYYE (305 aa)).

It belongs to the argonaute family. Ago subfamily.

Functionally, involved in RNA-mediated post-transcriptional gene silencing (PTGS). Main component of the RNA-induced silencing complex (RISC) that binds to a short guide RNA such as a microRNA (miRNA) or small interfering RNA (siRNA). RISC uses the mature miRNA or siRNA as a guide for slicer-directed cleavage of homologous mRNAs to repress gene expression. The protein is Protein argonaute 3 (AGO3) of Arabidopsis thaliana (Mouse-ear cress).